We begin with the raw amino-acid sequence, 366 residues long: Phenylalanine--tRNA ligase alpha subunit (366 aa).

Residue Glu-259 coordinates Mg(2+).

This sequence belongs to the class-II aminoacyl-tRNA synthetase family. Phe-tRNA synthetase alpha subunit type 1 subfamily. Tetramer of two alpha and two beta subunits. Mg(2+) is required as a cofactor.

The protein localises to the cytoplasm. It catalyses the reaction tRNA(Phe) + L-phenylalanine + ATP = L-phenylalanyl-tRNA(Phe) + AMP + diphosphate + H(+). In Erythrobacter litoralis (strain HTCC2594), this protein is Phenylalanine--tRNA ligase alpha subunit.